The sequence spans 162 residues: NADH-quinone oxidoreductase subunit I (162 aa).

4Fe-4S ferredoxin-type domains lie at 53-83 (LRRY…IESE) and 93-122 (TRYD…ETHI). 8 residues coordinate [4Fe-4S] cluster: C63, C66, C69, C73, C102, C105, C108, and C112.

It belongs to the complex I 23 kDa subunit family. NDH-1 is composed of 14 different subunits. Subunits NuoA, H, J, K, L, M, N constitute the membrane sector of the complex. Requires [4Fe-4S] cluster as cofactor.

The protein localises to the cell inner membrane. The catalysed reaction is a quinone + NADH + 5 H(+)(in) = a quinol + NAD(+) + 4 H(+)(out). Its function is as follows. NDH-1 shuttles electrons from NADH, via FMN and iron-sulfur (Fe-S) centers, to quinones in the respiratory chain. The immediate electron acceptor for the enzyme in this species is believed to be ubiquinone. Couples the redox reaction to proton translocation (for every two electrons transferred, four hydrogen ions are translocated across the cytoplasmic membrane), and thus conserves the redox energy in a proton gradient. The chain is NADH-quinone oxidoreductase subunit I from Herminiimonas arsenicoxydans.